The following is a 453-amino-acid chain: Homogentisate 1,2-dioxygenase (453 aa).

The tract at residues 1–42 is disordered; sequence MLEKAEKQRRAGSGQQRAAGYMPGFGNDFETESLPGALPQGQ. Catalysis depends on H306, which acts as the Proton acceptor. The Fe cation site is built by H349 and E355. Residues Y364 and H385 each contribute to the homogentisate site. A Fe cation-binding site is contributed by H385.

This sequence belongs to the homogentisate dioxygenase family. Hexamer; dimer of trimers. Fe cation is required as a cofactor.

The enzyme catalyses homogentisate + O2 = 4-maleylacetoacetate + H(+). The protein operates within amino-acid degradation; L-phenylalanine degradation; acetoacetate and fumarate from L-phenylalanine: step 4/6. Its function is as follows. Involved in the catabolism of homogentisate (2,5-dihydroxyphenylacetate or 2,5-OH-PhAc), a central intermediate in the degradation of phenylalanine and tyrosine. Catalyzes the oxidative ring cleavage of the aromatic ring of homogentisate to yield maleylacetoacetate. This chain is Homogentisate 1,2-dioxygenase, found in Rhizobium meliloti (strain 1021) (Ensifer meliloti).